A 205-amino-acid chain; its full sequence is Dephospho-CoA kinase (205 aa).

The region spanning 4-203 is the DPCK domain; that stretch reads KIGITGGIGS…QKIHYLCSAK (200 aa). 12 to 17 serves as a coordination point for ATP; it reads GSGKSV.

It belongs to the CoaE family.

It localises to the cytoplasm. The enzyme catalyses 3'-dephospho-CoA + ATP = ADP + CoA + H(+). The protein operates within cofactor biosynthesis; coenzyme A biosynthesis; CoA from (R)-pantothenate: step 5/5. Its function is as follows. Catalyzes the phosphorylation of the 3'-hydroxyl group of dephosphocoenzyme A to form coenzyme A. The chain is Dephospho-CoA kinase from Bacteroides fragilis (strain YCH46).